The sequence spans 103 residues: Small ribosomal subunit protein uS10 (103 aa).

It belongs to the universal ribosomal protein uS10 family. In terms of assembly, part of the 30S ribosomal subunit.

Involved in the binding of tRNA to the ribosomes. This chain is Small ribosomal subunit protein uS10, found in Pseudoalteromonas translucida (strain TAC 125).